Consider the following 184-residue polypeptide: Photosystem I assembly protein Ycf4 (184 aa).

2 consecutive transmembrane segments (helical) span residues 22–42 (FFWA…GTSS) and 57–77 (ISFF…LFIS).

It belongs to the Ycf4 family.

Its subcellular location is the plastid. It is found in the chloroplast thylakoid membrane. Functionally, seems to be required for the assembly of the photosystem I complex. This is Photosystem I assembly protein Ycf4 from Lemna minor (Common duckweed).